Consider the following 271-residue polypeptide: 3-methyl-2-oxobutanoate hydroxymethyltransferase (271 aa).

Residues Asp53 and Asp92 each contribute to the Mg(2+) site. 3-methyl-2-oxobutanoate-binding positions include 53-54 (DS), Asp92, and Lys120. Mg(2+) is bound at residue Glu122. Glu189 serves as the catalytic Proton acceptor.

It belongs to the PanB family. In terms of assembly, homodecamer; pentamer of dimers. The cofactor is Mg(2+).

The protein localises to the cytoplasm. The catalysed reaction is 3-methyl-2-oxobutanoate + (6R)-5,10-methylene-5,6,7,8-tetrahydrofolate + H2O = 2-dehydropantoate + (6S)-5,6,7,8-tetrahydrofolate. Its pathway is cofactor biosynthesis; (R)-pantothenate biosynthesis; (R)-pantoate from 3-methyl-2-oxobutanoate: step 1/2. In terms of biological role, catalyzes the reversible reaction in which hydroxymethyl group from 5,10-methylenetetrahydrofolate is transferred onto alpha-ketoisovalerate to form ketopantoate. The polypeptide is 3-methyl-2-oxobutanoate hydroxymethyltransferase (Paraburkholderia phymatum (strain DSM 17167 / CIP 108236 / LMG 21445 / STM815) (Burkholderia phymatum)).